The sequence spans 454 residues: GA-binding protein alpha chain (454 aa).

The region spanning 168–251 is the PNT domain; sequence AALEGYRKEQ…SHLELLRKYV (84 aa). A disordered region spans residues 295-316; sequence KVQRSPRISGEDRSSPGNRTGN. Serine 303 bears the Phosphoserine mark. The ETS DNA-binding region spans 320 to 400; it reads IQLWQFLLEL…QGKRFVYKFV (81 aa).

This sequence belongs to the ETS family. Heterotetramer of two alpha and two beta subunits. In terms of tissue distribution, ubiquitous.

The protein localises to the nucleus. Functionally, transcription factor capable of interacting with purine rich repeats (GA repeats). Positively regulates transcription of transcriptional repressor Rhit/Zpf13. The protein is GA-binding protein alpha chain (Gabpa) of Mus musculus (Mouse).